The sequence spans 166 residues: Protein SprT (166 aa).

The region spanning 19-164 (RDALARANLK…CVRCGDTLVA (146 aa)) is the SprT-like domain. Position 78 (His78) interacts with Zn(2+). The active site involves Glu79. Position 82 (His82) interacts with Zn(2+).

It belongs to the SprT family. Requires Zn(2+) as cofactor.

It localises to the cytoplasm. The chain is Protein SprT from Cronobacter sakazakii (strain ATCC BAA-894) (Enterobacter sakazakii).